Reading from the N-terminus, the 457-residue chain is Carboxypeptidase N catalytic chain (457 aa).

Positions 1–23 (MPDLPSAFLPLLLLSKFVTPVTF) are cleaved as a signal peptide. The Peptidase M14 domain maps to 24 to 338 (RHHRYDDLVR…EALIQFLEQV (315 aa)). A disulfide bridge links cysteine 42 with cysteine 104. The Zn(2+) site is built by histidine 86, glutamate 89, and histidine 216. A disulfide bridge links cysteine 271 with cysteine 311. Catalysis depends on glutamate 308, which acts as the Proton donor/acceptor. 3 O-linked (GalNAc...) threonine glycosylation sites follow: threonine 400, threonine 402, and threonine 409. The disordered stretch occupies residues 418-457 (STTQVHPVQKAPGRGQGSRAKQPRTSRKKDQAAKRHRGPA).

Belongs to the peptidase M14 family. In terms of assembly, tetramer of two catalytic chains and two glycosylated inactive chains. Zn(2+) serves as cofactor. In terms of tissue distribution, plasma. Expressed in liver.

The protein resides in the secreted. The protein localises to the extracellular space. The catalysed reaction is Release of a C-terminal basic amino acid, preferentially lysine.. In terms of biological role, protects the body from potent vasoactive and inflammatory peptides containing C-terminal Arg or Lys (such as kinins or anaphylatoxins) which are released into the circulation. This is Carboxypeptidase N catalytic chain (Cpn1) from Rattus norvegicus (Rat).